A 341-amino-acid polypeptide reads, in one-letter code: Type II methyltransferase M.NgoPII (341 aa).

An SAM-dependent MTase C5-type domain is found at 12–341 (MKIISLFSGC…AAAIKKTLER (330 aa)). Cys84 is an active-site residue.

It belongs to the class I-like SAM-binding methyltransferase superfamily. C5-methyltransferase family.

The catalysed reaction is a 2'-deoxycytidine in DNA + S-adenosyl-L-methionine = a 5-methyl-2'-deoxycytidine in DNA + S-adenosyl-L-homocysteine + H(+). Its function is as follows. A methylase that recognizes the double-stranded sequence 5'-GGCC-3', methylates C-3 on both strands, and protects the DNA from cleavage by the NgoPII endonuclease. This is Type II methyltransferase M.NgoPII (ngoPIIM) from Neisseria gonorrhoeae.